We begin with the raw amino-acid sequence, 266 residues long: MTLTEIIILAIIQGITEFLPISSSAHLILPSVLLGWENQGLAFDVAVHVGSLLAVMIYFRGDIGRMLVAWFGSGFSKNQTDDSRLAWWVIIATIPALIFGFAGKAFIEEYARSALVIACTTIGFGLLLWYADKKAALNKHIYDMTWKSALIVGMAQALALIPGTSRSGITMTAGLMLGLDRESAARFSFLLSIPVILGAGLLATLDLVSAPDAVDWNALIVGAVLSFVSAYACIYLFLAWISRIGMLPFVIYRMLLGVILLLFVFA.

Transmembrane regions (helical) follow at residues 1–21 (MTLT…FLPI), 39–59 (QGLA…MIYF), 87–107 (WWVI…KAFI), 111–131 (ARSA…LWYA), 150–172 (LIVG…ITMT), 187–207 (FSFL…TLDL), 218–238 (ALIV…YLFL), and 244–264 (IGML…LLFV).

It belongs to the UppP family.

Its subcellular location is the cell inner membrane. The catalysed reaction is di-trans,octa-cis-undecaprenyl diphosphate + H2O = di-trans,octa-cis-undecaprenyl phosphate + phosphate + H(+). Functionally, catalyzes the dephosphorylation of undecaprenyl diphosphate (UPP). Confers resistance to bacitracin. This chain is Undecaprenyl-diphosphatase, found in Pseudoalteromonas atlantica (strain T6c / ATCC BAA-1087).